Reading from the N-terminus, the 367-residue chain is Alpha-2-HS-glycoprotein (367 aa).

The first 18 residues, 1-18, serve as a signal peptide directing secretion; the sequence is MKSLVLLLCLAQLWGCHS. Residues 27–133 enclose the Cystatin fetuin-A-type 1 domain; the sequence is YRQPNCDDPE…KFSVVYAKCD (107 aa). Cystine bridges form between Cys32–Cys358, Cys89–Cys100, Cys114–Cys132, Cys146–Cys149, Cys208–Cys219, and Cys230–Cys247. A phosphoserine mark is found at Ser134, Ser135, and Ser138. Residues 144-255 enclose the Cystatin fetuin-A-type 2 domain; the sequence is KVCQDCPLLA…TCTVFQTQPV (112 aa). N-linked (GlcNAc...) asparagine glycosylation is found at Asn156 and Asn176. Residues 254-301 form a disordered region; the sequence is PVTSQPQPEGANETVPTPVVDPDAPPSPPLGAPGLPPAGSPPDSHVLL. N-linked (GlcNAc...) asparagine glycosylation is present at Asn265. The span at 276 to 293 shows a compositional bias: pro residues; it reads DAPPSPPLGAPGLPPAGS. Positions 301–340 are cleaved as a propeptide — connecting peptide; that stretch reads LAAPPGHQLHWAHYDLRHTFMGVVSLGSPSGEASHPRKTR. Thr319 carries the phosphothreonine modification. Ser325, Ser328, and Ser330 each carry phosphoserine. O-linked (GalNAc...) threonine glycosylation occurs at Thr339.

Belongs to the fetuin family. In terms of assembly, alpha-2-HS glycoprotein derives from this precursor, when the connecting peptide is cleaved off. The two chains A and B are held together by a single disulfide bond. Phosphorylated by FAM20C in the extracellular medium.

The protein resides in the secreted. Promotes endocytosis, possesses opsonic properties and influences the mineral phase of bone. Shows affinity for calcium and barium ions. The chain is Alpha-2-HS-glycoprotein (AHSG) from Pan troglodytes (Chimpanzee).